The following is a 747-amino-acid chain: Putative T-box protein 31 (747 aa).

Residues 33–199 (QMLTKRKKTN…AGPAAKKTPD (167 aa)) constitute a DNA-binding region (T-box). Disordered regions lie at residues 268–289 (SLSS…DFDD) and 332–364 (SINN…VRDK). The segment covering 332–358 (SINNPGYLSTASSPAALNQDSSASEKS) has biased composition (polar residues).

The protein resides in the nucleus. This chain is Putative T-box protein 31 (tbx-31), found in Caenorhabditis elegans.